A 208-amino-acid polypeptide reads, in one-letter code: Putative dioxygenase RT0384 (208 aa).

Belongs to the intradiol ring-cleavage dioxygenase family.

This is Putative dioxygenase RT0384 from Rickettsia typhi (strain ATCC VR-144 / Wilmington).